The primary structure comprises 337 residues: Cytidine deaminase 2 (337 aa).

2 consecutive CMP/dCMP-type deaminase domains span residues 43-164 and 199-320; these read TDPI…FSSL and LDCS…LKYL. Substrate is bound at residue 84 to 86; sequence NVD. Residue H97 coordinates Zn(2+). The active-site Proton donor is the E99. The Zn(2+) site is built by C132 and C135.

This sequence belongs to the cytidine and deoxycytidylate deaminase family. In terms of assembly, homodimer. Requires Zn(2+) as cofactor.

It catalyses the reaction cytidine + H2O + H(+) = uridine + NH4(+). The catalysed reaction is 2'-deoxycytidine + H2O + H(+) = 2'-deoxyuridine + NH4(+). This enzyme scavenges exogenous and endogenous cytidine and 2'-deoxycytidine for UMP synthesis. The chain is Cytidine deaminase 2 (CDA2) from Arabidopsis thaliana (Mouse-ear cress).